Reading from the N-terminus, the 173-residue chain is Peptidoglycan-associated lipoprotein (173 aa).

The signal sequence occupies residues 1-21 (MKSKKIFKILTLLLPMITTFS). Cysteine 22 is lipidated: N-palmitoyl cysteine. A lipid anchor (S-diacylglycerol cysteine) is attached at cysteine 22. An OmpA-like domain is found at 59 to 173 (ETLEKLKKGN…KNRRSVIIYQ (115 aa)).

Belongs to the Pal lipoprotein family.

It localises to the cell outer membrane. The chain is Peptidoglycan-associated lipoprotein from Buchnera aphidicola subsp. Baizongia pistaciae (strain Bp).